A 261-amino-acid polypeptide reads, in one-letter code: Phosphonates import ATP-binding protein PhnC (261 aa).

In terms of domain architecture, ABC transporter spans 8–253 (LRVENLSKTY…WFRRIYGEGA (246 aa)). 41–48 (GLSGSGKS) lines the ATP pocket.

The protein belongs to the ABC transporter superfamily. Phosphonates importer (TC 3.A.1.9.1) family. As to quaternary structure, the complex is composed of two ATP-binding proteins (PhnC), two transmembrane proteins (PhnE) and a solute-binding protein (PhnD).

It is found in the cell inner membrane. The catalysed reaction is phosphonate(out) + ATP + H2O = phosphonate(in) + ADP + phosphate + H(+). In terms of biological role, part of the ABC transporter complex PhnCDE involved in phosphonates import. Responsible for energy coupling to the transport system. In Bdellovibrio bacteriovorus (strain ATCC 15356 / DSM 50701 / NCIMB 9529 / HD100), this protein is Phosphonates import ATP-binding protein PhnC.